The sequence spans 149 residues: Squidulin (149 aa).

A1 bears the N-acetylalanine mark. 4 consecutive EF-hand domains span residues 7–42, 43–78, 80–115, and 117–149; these read KQIA…LGRT, PSDA…QMGP, DPEK…FSDE, and LTSE…MTPK. Residues D20, D22, D24, Q26, E31, D56, D58, N60, T62, E67, D93, D95, N97, E104, D130, D132, D134, M136, and E141 each contribute to the Ca(2+) site.

The protein belongs to the calmodulin family.

Not known. This protein has four functional calcium-binding sites. This is Squidulin from Doryteuthis pealeii (Longfin inshore squid).